The primary structure comprises 153 residues: ATP synthase subunit a (153 aa).

2 helical membrane passes run 43-63 (AFHL…LLIF) and 104-124 (IAPL…VDLI).

It belongs to the ATPase A chain family. F-type ATPases have 2 components, CF(1) - the catalytic core - and CF(0) - the membrane proton channel. CF(1) has five subunits: alpha(3), beta(3), gamma(1), delta(1), epsilon(1). CF(0) has three main subunits: a(1), b(2) and c(9-12). The alpha and beta chains form an alternating ring which encloses part of the gamma chain. CF(1) is attached to CF(0) by a central stalk formed by the gamma and epsilon chains, while a peripheral stalk is formed by the delta and b chains.

The protein resides in the cell inner membrane. Functionally, key component of the proton channel; it plays a direct role in the translocation of protons across the membrane. The polypeptide is ATP synthase subunit a (atpB) (Pseudomonas putida (Arthrobacter siderocapsulatus)).